The primary structure comprises 238 residues: Large ribosomal subunit protein uL2 (238 aa).

Residues 197 to 219 (ASDHPFGGKRHSNHSKPFTVSKW) are disordered.

It belongs to the universal ribosomal protein uL2 family. As to quaternary structure, part of the 50S ribosomal subunit. Forms a bridge to the 30S subunit in the 70S ribosome.

Functionally, one of the primary rRNA binding proteins. Required for association of the 30S and 50S subunits to form the 70S ribosome, for tRNA binding and peptide bond formation. It has been suggested to have peptidyltransferase activity; this is somewhat controversial. Makes several contacts with the 16S rRNA in the 70S ribosome. This is Large ribosomal subunit protein uL2 from Nanoarchaeum equitans (strain Kin4-M).